The chain runs to 221 residues: Probable septum site-determining protein MinC (221 aa).

The protein belongs to the MinC family. As to quaternary structure, interacts with MinD and FtsZ.

Cell division inhibitor that blocks the formation of polar Z ring septums. Rapidly oscillates between the poles of the cell to destabilize FtsZ filaments that have formed before they mature into polar Z rings. Prevents FtsZ polymerization. This chain is Probable septum site-determining protein MinC, found in Aliivibrio fischeri (strain MJ11) (Vibrio fischeri).